Consider the following 457-residue polypeptide: Reticulophagy regulator 3 (457 aa).

The disordered stretch occupies residues 1-24 (MAQRVGEEEQGASGLRRRRSGARC). A run of 3 helical transmembrane segments spans residues 80 to 100 (FFAL…MIII), 165 to 185 (PGKF…LGGY), and 186 to 206 (IPGV…PLAI). Over residues 291–305 (ENGTFNLSRGQTPLT) the composition is skewed to polar residues. 2 disordered regions span residues 291–351 (ENGT…IPST) and 410–457 (AYAE…HSHQ). The span at 310-326 (DLDRHSDPEESFARDLP) shows a compositional bias: basic and acidic residues. Residues 428–441 (LDTDAEADDFELLD) are compositionally biased toward acidic residues. The LIR motif signature appears at 435–440 (DDFELL). Residues 443–457 (SELSQMDPSSSHSHQ) are compositionally biased toward polar residues.

It belongs to the RETREG family. As to quaternary structure, interacts with ATG8 family modifier proteins.

It localises to the endoplasmic reticulum membrane. Functionally, endoplasmic reticulum (ER)-anchored autophagy regulator which exists in an inactive state under basal conditions but is activated following cellular stress. When activated, induces ER fragmentation and mediates ER delivery into lysosomes through sequestration into autophagosomes via interaction with ATG8 family proteins. Promotes ER membrane curvature and ER tubulation required for subsequent ER fragmentation and engulfment into autophagosomes. In Xenopus tropicalis (Western clawed frog), this protein is Reticulophagy regulator 3 (retreg3).